A 230-amino-acid polypeptide reads, in one-letter code: Putative 14-3-3-like protein GF14-H (230 aa).

This sequence belongs to the 14-3-3 family.

Its function is as follows. Is associated with a DNA binding complex that binds to the G box, a well-characterized cis-acting DNA regulatory element found in plant genes. This chain is Putative 14-3-3-like protein GF14-H (GF14H), found in Oryza sativa subsp. japonica (Rice).